Here is a 349-residue protein sequence, read N- to C-terminus: UPF0284 protein MA_3887 (349 aa).

Belongs to the UPF0284 family.

The sequence is that of UPF0284 protein MA_3887 from Methanosarcina acetivorans (strain ATCC 35395 / DSM 2834 / JCM 12185 / C2A).